A 378-amino-acid polypeptide reads, in one-letter code: Putative aminoglycoside phosphotransferase (378 aa).

ATP is bound by residues Arg-79 and 134–136 (DYV). Asp-249 functions as the Proton acceptor in the catalytic mechanism. The Mg(2+) site is built by Asn-254, Asp-267, and Glu-269.

It belongs to the aminoglycoside phosphotransferase family.

Its function is as follows. Might catalyze the phosphorylation of aminoglycosides and confer aminoglycoside antibiotics resistance. The protein is Putative aminoglycoside phosphotransferase of Mycobacterium tuberculosis (strain CDC 1551 / Oshkosh).